The following is a 294-amino-acid chain: 4-hydroxy-tetrahydrodipicolinate synthase (294 aa).

Residue threonine 44 coordinates pyruvate. The active-site Proton donor/acceptor is tyrosine 132. Lysine 160 serves as the catalytic Schiff-base intermediate with substrate. Valine 202 lines the pyruvate pocket.

This sequence belongs to the DapA family. Homotetramer; dimer of dimers.

Its subcellular location is the cytoplasm. It carries out the reaction L-aspartate 4-semialdehyde + pyruvate = (2S,4S)-4-hydroxy-2,3,4,5-tetrahydrodipicolinate + H2O + H(+). The protein operates within amino-acid biosynthesis; L-lysine biosynthesis via DAP pathway; (S)-tetrahydrodipicolinate from L-aspartate: step 3/4. Functionally, catalyzes the condensation of (S)-aspartate-beta-semialdehyde [(S)-ASA] and pyruvate to 4-hydroxy-tetrahydrodipicolinate (HTPA). The polypeptide is 4-hydroxy-tetrahydrodipicolinate synthase (Leptospira borgpetersenii serovar Hardjo-bovis (strain JB197)).